Here is a 334-residue protein sequence, read N- to C-terminus: uncharacterized protein (334 aa).

Substrate is bound at residue Ser-126. The active-site Proton acceptor is the Tyr-151.

It belongs to the NAD(P)-dependent epimerase/dehydratase family. dTDP-glucose dehydratase subfamily.

This is an uncharacterized protein from Escherichia coli O111:H-.